The sequence spans 269 residues: Formamidopyrimidine-DNA glycosylase (269 aa).

Pro-2 (schiff-base intermediate with DNA) is an active-site residue. Glu-3 functions as the Proton donor in the catalytic mechanism. Lys-57 functions as the Proton donor; for beta-elimination activity in the catalytic mechanism. DNA contacts are provided by His-90, Arg-109, and Lys-150. Residues 235–269 (QVYGKAGEPCPECGEAIQEQKIGQRNTFYCSYCQC) form an FPG-type zinc finger. Arg-259 functions as the Proton donor; for delta-elimination activity in the catalytic mechanism.

The protein belongs to the FPG family. Monomer. The cofactor is Zn(2+).

It carries out the reaction Hydrolysis of DNA containing ring-opened 7-methylguanine residues, releasing 2,6-diamino-4-hydroxy-5-(N-methyl)formamidopyrimidine.. The enzyme catalyses 2'-deoxyribonucleotide-(2'-deoxyribose 5'-phosphate)-2'-deoxyribonucleotide-DNA = a 3'-end 2'-deoxyribonucleotide-(2,3-dehydro-2,3-deoxyribose 5'-phosphate)-DNA + a 5'-end 5'-phospho-2'-deoxyribonucleoside-DNA + H(+). In terms of biological role, involved in base excision repair of DNA damaged by oxidation or by mutagenic agents. Acts as a DNA glycosylase that recognizes and removes damaged bases. Has a preference for oxidized purines, such as 7,8-dihydro-8-oxoguanine (8-oxoG). Has AP (apurinic/apyrimidinic) lyase activity and introduces nicks in the DNA strand. Cleaves the DNA backbone by beta-delta elimination to generate a single-strand break at the site of the removed base with both 3'- and 5'-phosphates. In Vibrio vulnificus (strain CMCP6), this protein is Formamidopyrimidine-DNA glycosylase.